The chain runs to 282 residues: D-arabinitol 2-dehydrogenase [ribulose-forming] (282 aa).

Residues Leu32 and Asn53 each coordinate NADP(+). Residue Ser170 is the Proton donor of the active site. Positions 185, 189, 218, and 220 each coordinate NADP(+). Tyr185 functions as the Proton acceptor in the catalytic mechanism. Residue Lys189 is the Lowers pKa of active site Tyr of the active site.

Belongs to the short-chain dehydrogenases/reductases (SDR) family.

It carries out the reaction D-arabinitol + NAD(+) = D-ribulose + NADH + H(+). The protein operates within carbohydrate metabolism; D-arabinitol metabolism. Its function is as follows. Catalyzes the NAD(+)-dependent oxidation of D-arabinitol at carbon 4 to produce D-ribulose. The protein is D-arabinitol 2-dehydrogenase [ribulose-forming] (ARD) of Candida tropicalis (Yeast).